A 355-amino-acid chain; its full sequence is Putative beta-lactamase HcpE (355 aa).

The first 22 residues, 1-22 (MGVKFLKILVCGLFFWSLNAHL), serve as a signal peptide directing secretion. 8 TPR repeats span residues 27 to 60 (DNSF…GVSE), 63 to 96 (TQLG…DDRE), 98 to 131 (CFGL…LKHP), 132 to 166 (ESCY…DMAK), 202 to 240 (GQAC…NNSG), 245 to 275 (LGSM…MGSA), 276 to 311 (VSCS…MGDE), and 312 to 344 (VGCF…GMKQ). Disulfide bonds link cysteine 54–cysteine 62, cysteine 90–cysteine 98, cysteine 126–cysteine 134, cysteine 160–cysteine 168, cysteine 197–cysteine 205, cysteine 234–cysteine 242, cysteine 270–cysteine 278, cysteine 306–cysteine 314, and cysteine 338–cysteine 346.

This sequence belongs to the hcp beta-lactamase family.

The protein localises to the secreted. It carries out the reaction a beta-lactam + H2O = a substituted beta-amino acid. Its function is as follows. May hydrolyze 6-aminopenicillinic acid and 7-aminocephalosporanic acid (ACA) derivatives. This is Putative beta-lactamase HcpE (hcpE) from Helicobacter pylori (strain ATCC 700392 / 26695) (Campylobacter pylori).